Consider the following 61-residue polypeptide: Small ribosomal subunit protein uS14 (61 aa).

Residues C24, C27, C40, and C43 each contribute to the Zn(2+) site.

The protein belongs to the universal ribosomal protein uS14 family. Zinc-binding uS14 subfamily. In terms of assembly, part of the 30S ribosomal subunit. Contacts proteins S3 and S10. Zn(2+) is required as a cofactor.

Binds 16S rRNA, required for the assembly of 30S particles and may also be responsible for determining the conformation of the 16S rRNA at the A site. This Campylobacter fetus subsp. fetus (strain 82-40) protein is Small ribosomal subunit protein uS14.